A 161-amino-acid polypeptide reads, in one-letter code: MSDDHHDDEHFHTGDSGAAATFPKQCSALRKNEHVMIKGRPCKIVEMSTSKTGKHGHAKVHMVAIDIFTSKKLEDICPSTHNMDVPVVKRREYLLMAIDDGYCSLMDPESCEQKDDLKLPDTELGQQIRDAYEKDEGSVLVQVVSAIGEEAILGWKVSTKE.

At Lys54 the chain carries Hypusine.

It belongs to the eIF-5A family. Post-translationally, lys-54 undergoes hypusination, a unique post-translational modification that consists in the addition of a butylamino group from spermidine to lysine side chain and leads to the formation of a hypusine residue. eIF-5As are the only known proteins to undergo this modification, which is essential for their function. In terms of tissue distribution, expressed in the somatic tissues.

The protein localises to the cytoplasm. Functionally, translation factor that promotes translation elongation and termination, particularly upon ribosome stalling at specific amino acid sequence contexts. Binds between the exit (E) and peptidyl (P) site of the ribosome and promotes rescue of stalled ribosome: specifically required for efficient translation of polyproline-containing peptides as well as other motifs that stall the ribosome. Acts as a ribosome quality control (RQC) cofactor by joining the RQC complex to facilitate peptidyl transfer during CAT tailing step. Acts in somatic tissues and its function in the soma is essential for normal growth and reproduction. The polypeptide is Eukaryotic translation initiation factor 5A-2 (iff-2) (Caenorhabditis elegans).